The following is an 869-amino-acid chain: Ribonucleoside-diphosphate reductase large chain 2 (869 aa).

The region spanning 1–92 is the ATP-cone domain; the sequence is MYVIKRDGRK…ISNLHKQTTK (92 aa). ATP-binding positions include 5–6, 11–17, Thr-53, and Asp-57; these read KR and EPVQFDK. 2 residues coordinate GDP: Ser-202 and Ser-217. Cys-218 and Cys-443 are oxidised to a cystine. DTTP-binding positions include 226–228, Lys-243, Arg-256, and 263–264; these read DSI and AG. Ser-227 carries the phosphoserine modification. Residue Lys-387 forms a Glycyl lysine isopeptide (Lys-Gly) (interchain with G-Cter in ubiquitin) linkage. Residue Asn-426 participates in GDP binding. Residue Asn-426 is the Proton acceptor of the active site. The Cysteine radical intermediate role is filled by Cys-428. Residues Glu-430 and 608–611 each bind GDP; that span reads TAST. The Proton acceptor role is filled by Glu-430. Residues 793 to 843 form a disordered region; sequence SALTESSDNEKDASPVPSEQSSVSSAMSNVKLEDSVAPAVPTETIKEDSDE. Phosphoserine occurs at positions 806, 827, and 868. Over residues 806 to 820 the composition is skewed to low complexity; the sequence is SPVPSEQSSVSSAMS.

This sequence belongs to the ribonucleoside diphosphate reductase large chain family. In terms of assembly, heterotetramer of two large (R1) and two small (R2) subunits. S.cerevisiae has two different R1 subunits (RNR1 and RNR3) and two different R2 subunits (RNR2 and RNR4). The functional form of the small subunits is a RNR2-RNR4 heterodimer, where RNR2 provides the iron-radical center and RNR4 is required for proper folding of RNR2 and assembly with the large subunits. Under normal growth conditions, the active form of the large subunits is a homodimer of the constitutively expressed RNR1. In damaged cells or cells arrested for DNA synthesis, the reductase consists of multiple species because of the association of the small subunits (RNR2-RNR4) with either the RNR1 homodimer or a heterodimer of RNR1 and the damage-inducible RNR3.

The protein resides in the cytoplasm. The catalysed reaction is a 2'-deoxyribonucleoside 5'-diphosphate + [thioredoxin]-disulfide + H2O = a ribonucleoside 5'-diphosphate + [thioredoxin]-dithiol. Its activity is regulated as follows. Under complex allosteric control mediated by deoxynucleoside triphosphates and ATP binding to separate specificity and activation sites on the large subunit. The type of nucleotide bound at the specificity site determines substrate preference. It seems probable that ATP makes the enzyme reduce CDP and UDP, dGTP favors ADP reduction and dTTP favors GDP reduction. Stimulated by ATP and inhibited by dATP binding to the activity site. In terms of biological role, provides the precursors necessary for DNA synthesis. Catalyzes the biosynthesis of deoxyribonucleotides from the corresponding ribonucleotides. In Saccharomyces cerevisiae (strain ATCC 204508 / S288c) (Baker's yeast), this protein is Ribonucleoside-diphosphate reductase large chain 2 (RNR3).